The following is a 494-amino-acid chain: Maintenance of mitochondrial morphology protein 1 (494 aa).

At 1 to 22 (MSSQPGDPATLPAQSSLSFTQG) the chain is on the lumenal side. A helical membrane pass occupies residues 23 to 43 (FLLGQLSVVLVLAAFIKFFIF). Topologically, residues 44–494 (GEAPPPPSRG…GSLPEAVTPG (451 aa)) are cytoplasmic. Disordered stretches follow at residues 50 to 98 (PSRG…SSST), 274 to 330 (PPLD…KSNV), 398 to 426 (VRTGDDAETASNGPRSTVSADIGGSARHE), and 449 to 494 (VASR…VTPG). The span at 54-64 (LSHRSATHRRS) shows a compositional bias: basic residues. Composition is skewed to polar residues over residues 65–76 (NSIYSNSPQEAG) and 85–98 (STSNVLRPVPSSST). One can recognise an SMP-LTD domain in the interval 130 to 387 (QPESLDWFNV…EPRVQVVGLP (258 aa)). Pro residues predominate over residues 274 to 286 (PPLDTPSHSPSPP). 2 stretches are compositionally biased toward polar residues: residues 406 to 416 (TASNGPRSTVS) and 466 to 477 (RSMTRQESSGDL).

The protein belongs to the MMM1 family. As to quaternary structure, homodimer. Component of the ER-mitochondria encounter structure (ERMES) or MDM complex, composed of mmm1, mdm10, mdm12 and mdm34. A mmm1 homodimer associates with one molecule of mdm12 on each side in a pairwise head-to-tail manner, and the SMP-LTD domains of mmm1 and mdm12 generate a continuous hydrophobic tunnel for phospholipid trafficking.

Its subcellular location is the endoplasmic reticulum membrane. Component of the ERMES/MDM complex, which serves as a molecular tether to connect the endoplasmic reticulum (ER) and mitochondria. Components of this complex are involved in the control of mitochondrial shape and protein biogenesis, and function in nonvesicular lipid trafficking between the ER and mitochondria. The mdm12-mmm1 subcomplex functions in the major beta-barrel assembly pathway that is responsible for biogenesis of all outer membrane beta-barrel proteins, and acts in a late step after the SAM complex. The mdm10-mdm12-mmm1 subcomplex further acts in the TOM40-specific pathway after the action of the mdm12-mmm1 complex. Essential for establishing and maintaining the structure of mitochondria and maintenance of mtDNA nucleoids. The sequence is that of Maintenance of mitochondrial morphology protein 1 from Aspergillus clavatus (strain ATCC 1007 / CBS 513.65 / DSM 816 / NCTC 3887 / NRRL 1 / QM 1276 / 107).